A 215-amino-acid chain; its full sequence is Sodium channel regulatory subunit beta-2 (215 aa).

The N-terminal stretch at methionine 1–serine 29 is a signal peptide. The Extracellular segment spans residues methionine 30–threonine 157. One can recognise an Ig-like C2-type domain in the interval valine 32 to arginine 154. N-linked (GlcNAc...) asparagine glycans are attached at residues asparagine 42, asparagine 66, and asparagine 74. 2 disulfides stabilise this stretch: cysteine 50-cysteine 127 and cysteine 72-cysteine 75. A helical membrane pass occupies residues valine 158–valine 179. Residues valine 180–lysine 215 lie on the Cytoplasmic side of the membrane. A disordered region spans residues lysine 187–lysine 215. Basic and acidic residues predominate over residues glutamine 189–lysine 215. The residue at position 192 (serine 192) is a Phosphoserine. A Phosphothreonine modification is found at threonine 204.

This sequence belongs to the sodium channel auxiliary subunit SCN2B (TC 8.A.17) family. A voltage-gated sodium (Nav) channel consists of an ion-conducting pore-forming alpha subunit functional on its own that is regulated by one or more beta subunits. The beta subunit SCN2B is disulfide-linked to the pore-forming alpha subunit. Interacts with SCN1A; regulatory subunit of SCN1A/Nav1.1. Interacts with SCN2A; regulatory subunit of SCN2A/Nav1.2. Interacts with SCN3A; regulatory subunit of SCN3A/Nav1.3. Interacts with SCN5A; regulatory subunit of SCN5A/Nav1.5. Interacts with SCN8A; regulatory subunit of SCN8A/Nav1.6. Interacts with SCN9A; regulatory subunit of SCN9A/Nav1.7. Interacts with SCN10A; regulatory subunit of SCN10A/Nav1.8. Interacts with TNR; may play a crucial role in clustering and regulation of activity of SCN2B-containing Nav channels at nodes of Ranvier.

The protein resides in the cell membrane. The protein localises to the cell projection. Its subcellular location is the axon. Its function is as follows. Regulatory subunit of multiple voltage-gated sodium (Nav) channels, that directly mediate the depolarization of excitable membranes. Navs, also called VGSCs (voltage-gated sodium channels) or VDSCs (voltage-dependent sodium channels), operate by switching between closed and open conformations depending on the voltage difference across the membrane. In the open conformation they allow Na(+) ions to selectively pass through the pore, along their electrochemical gradient. The influx of Na+ ions provokes membrane depolarization, initiating the propagation of electrical signals throughout cells and tissues. The accessory beta subunits participate in localization and functional modulation of the Nav channels. Modulates the activity of SCN1A/Nav1.1, SCN2A/Nav1.2, SCN2A/Nav1.3, SCN5A/Nav1.5, SCN8A/Nav1.6, SCN9A/Nav1.7 and SCN10A/Nav1.8. This chain is Sodium channel regulatory subunit beta-2, found in Canis lupus familiaris (Dog).